A 108-amino-acid chain; its full sequence is uncharacterized protein (108 aa).

Helical transmembrane passes span 51–71 (VFAA…FCFL) and 86–106 (PLST…KSLL).

It localises to the membrane. This is an uncharacterized protein from Saccharomyces cerevisiae (strain ATCC 204508 / S288c) (Baker's yeast).